Reading from the N-terminus, the 1416-residue chain is Isonitrile lipopeptide synthase (1416 aa).

Positions 188–215 form a coiled coil; that stretch reads LRETAKVAEALRRQADAVQRELTAEAGQ. The region spanning 965 to 1028 is the Carrier domain; it reads RVWSRHLGRP…NLVCDLGSNP (64 aa). S988 carries the O-(pantetheine 4'-phosphoryl)serine modification.

It belongs to the ATP-dependent AMP-binding enzyme family. Requires pantetheine 4'-phosphate as cofactor.

The enzyme catalyses 2 a (3R)-3-isocyanyl-fatty acyl-[ACP] + L-lysine + ATP + 2 NADPH = an isonitrile lipopeptide + 2 holo-[ACP] + AMP + diphosphate + 2 NADP(+). Nonribosomal peptide synthetase (NRPS) involved in the biosynthesis of a unique class of isonitrile lipopeptides (INLPs) that seem to play a role in metal acquisition in M.marinum. Catalyzes the final step in the pathway, i.e. the condensation of a (3R)-3-isocyanyl-fatty acyl-[ACP] to both amino groups of a lysine, producing isonitrile lipopeptides. The sequence is that of Isonitrile lipopeptide synthase from Mycobacterium marinum (strain ATCC BAA-535 / M).